The chain runs to 307 residues: Mediator of RNA polymerase II transcription subunit 18 (307 aa).

Positions 117-126 (TNFNSTNEDQ) are enriched in polar residues. Positions 117–162 (TNFNSTNEDQNNSKHTEDTVNESRNSDDIIDVDMDASPAPSNESCS) are disordered.

This sequence belongs to the Mediator complex subunit 18 family. As to quaternary structure, component of the Mediator complex, which is composed of at least 21 subunits that form three structurally distinct submodules. The Mediator head module contains MED6, MED8, MED11, SRB4/MED17, SRB5/MED18, ROX3/MED19, SRB2/MED20 and SRB6/MED22, the middle module contains MED1, MED4, NUT1/MED5, MED7, CSE2/MED9, NUT2/MED10, SRB7/MED21 and SOH1/MED31, and the tail module contains MED2, PGD1/MED3, RGR1/MED14, GAL11/MED15 and SIN4/MED16. The head and the middle modules interact directly with RNA polymerase II, whereas the elongated tail module interacts with gene-specific regulatory proteins. SRB5/MED18 interacts directly with MED8 and SRB2/MED20.

It is found in the nucleus. Its function is as follows. Component of the Mediator complex, a coactivator involved in the regulated transcription of nearly all RNA polymerase II-dependent genes. Mediator functions as a bridge to convey information from gene-specific regulatory proteins to the basal RNA polymerase II transcription machinery. The Mediator complex, having a compact conformation in its free form, is recruited to promoters by direct interactions with regulatory proteins and serves for the assembly of a functional preinitiation complex with RNA polymerase II and the general transcription factors. The Mediator complex unfolds to an extended conformation and partially surrounds RNA polymerase II, specifically interacting with the unphosphorylated form of the C-terminal domain (CTD) of RNA polymerase II. The Mediator complex dissociates from the RNA polymerase II holoenzyme and stays at the promoter when transcriptional elongation begins. This chain is Mediator of RNA polymerase II transcription subunit 18 (SRB5), found in Saccharomyces cerevisiae (strain ATCC 204508 / S288c) (Baker's yeast).